Reading from the N-terminus, the 615-residue chain is MAVYVGMLRLGRLCAGSSGVLGARVALSRSWQEARLQGVRFLSSREVDRMVSLPIGGLSYVQGCTKKHLNSKTVGQCLDTTAQRVPEREALVVLHEDVRLTFGQLKEEVDKAASGLLSIGLCKGDRLGMWGPNSYAWVLMQLATAQAGIILVSVNPAYQAMELEYVLKKVGCKALVFPKQFKTQQYYNILKQICPEVDNAQPGGLKSQRLPDLTTVISVDAPLPGTLLLDEVVAAGSTRQHLDQLQYNQQFLSCHDPINIQFTSGTTGSPKGATLSHYNIVNNSNMLGERLKLHEKTPEQLRMILPSPLYHCLGSVGGTMMCLMYGATLILASPVFNGKKALEAISRERGSFLYGTPTMFVDILNQPDFSSYDISTMCGGVIAGSPAPPELIRAIINKINMKDLVVAYGTPENSPVTFAHFPEDTVEQKAESVGRIMPHTEARIMNMEAGTLAELNTPGELCIRGYCVMLGYWGEPQKTEEAVDQDKWYRTGDVATMNEQGFCKIVGRSKDMIIRGGENIYPAELEDFFHTHPKVQEVQVVGVKDDRMGEEICACIRLKDGEETTVEEIKAFCKGKISHFKIPRYIVFVTNYPLTISGKIQKFKLREQMERHLNL.

A mitochondrion-targeting transit peptide spans Met-1–Phe-41. Lys-179 is subject to N6-acetyllysine. Lys-182 is modified (N6-acetyllysine; alternate). An N6-succinyllysine; alternate modification is found at Lys-182. Thr-263 to Lys-271 contributes to the ATP binding site. 2 positions are modified to N6-acetyllysine: Lys-340 and Lys-398. Residue Lys-478 is modified to N6-succinyllysine. ATP-binding residues include Asp-493 and Arg-508. Lys-510 carries the N6-acetyllysine modification. An N6-acetyllysine; alternate mark is found at Lys-544 and Lys-570. An N6-succinyllysine; alternate mark is found at Lys-544 and Lys-570. Position 599 (Lys-599) interacts with ATP. Lys-599 carries the N6-succinyllysine modification.

The protein belongs to the ATP-dependent AMP-binding enzyme family.

The protein localises to the mitochondrion. It catalyses the reaction a medium-chain fatty acid + ATP + CoA = a medium-chain fatty acyl-CoA + AMP + diphosphate. The enzyme catalyses octanoate + ATP + CoA = octanoyl-CoA + AMP + diphosphate. In terms of biological role, acyl-CoA synthases catalyze the initial reaction in fatty acid metabolism, by forming a thioester with CoA. Has some preference toward medium-chain substrates. Plays a role in adipocyte differentiation. This Pongo abelii (Sumatran orangutan) protein is Medium-chain acyl-CoA ligase ACSF2, mitochondrial.